Consider the following 319-residue polypeptide: MFIMIKKSELAKAIIVTGALVFSIPTLAEVTLSETTVSSIKSEATVSSTKKALPATPSDCIADSKITAVALSDTRDNGPFSIRTKRISRQSAKGFGGGTIHYPTNASGCGLLGAIAVVPGYVSYENSIKWWGPRLASWGFVVITINTNSIYDDPDSRAAQLNAALDNMIADDTVGSMIDPKRLGAIGWSMGGGGALKLATERSTVRAIMPLAPYHDKSYGEVKTPTLVIACEDDRIAETKKYANAFYKNAIGPKMKVEVNNGSHFCPSYRFNEILLSKPGIAWMQRYINNDTRFDKFLCANENYSKSPRISAYDYKDCP.

Ser189 functions as the Nucleophile in the catalytic mechanism. Residues Asp314 and Asp317 each contribute to the Ca(2+) site.

It carries out the reaction a triacylglycerol + H2O = a diacylglycerol + a fatty acid + H(+). The sequence is that of Lipase 1 (lip1) from Moraxella sp. (strain TA144).